A 597-amino-acid polypeptide reads, in one-letter code: Protein disulfide isomerase-like 1-4 (597 aa).

The first 25 residues, 1–25, serve as a signal peptide directing secretion; sequence MAFRVLLLFSLTALLIFSAVSPSFA. Composition is skewed to acidic residues over residues 37 to 49 and 61 to 84; these read LSFL…DDVP and DEFE…EGDF. Residues 37–101 form a disordered region; sequence LSFLEDLKED…SDPLPTPEID (65 aa). Positions 85–208 constitute a Thioredoxin 1 domain; the sequence is SDLGNPDSDP…IVTWVKKKIG (124 aa). Asparagine 112 carries an N-linked (GlcNAc...) asparagine glycan. Active-site nucleophile residues include cysteine 132 and cysteine 135. The cysteines at positions 132 and 135 are disulfide-linked. 2 N-linked (GlcNAc...) asparagine glycosylation sites follow: asparagine 213 and asparagine 342. A Thioredoxin 2 domain is found at 429-550; it reads FYKSDPIPEK…FYKFLRKHAT (122 aa). Active-site nucleophile residues include cysteine 471 and cysteine 474. The cysteines at positions 471 and 474 are disulfide-linked. Asparagine 524 carries an N-linked (GlcNAc...) asparagine glycan. The interval 555 to 597 is disordered; it reads LEKPASTESPKTAESTPKVETTETKESPDSTTKSSQSDSKDEL. Residues 560-573 show a composition bias toward polar residues; sequence STESPKTAESTPKV. The Prevents secretion from ER signature appears at 594 to 597; sequence KDEL.

It belongs to the protein disulfide isomerase family. In terms of assembly, interacts with MEE8 and MED37A. As to expression, expressed in germinating seedling, including the cotyledons and hypocotyl, in vascular tissues, in pollen grains, root tips, leaf trichomes, developing seeds and siliques.

It localises to the endoplasmic reticulum lumen. The protein resides in the golgi apparatus. Its subcellular location is the vacuole. The protein localises to the nucleus. It is found in the secreted. It localises to the cell wall. The enzyme catalyses Catalyzes the rearrangement of -S-S- bonds in proteins.. In terms of biological role, acts as a protein-folding catalyst that interacts with nascent polypeptides to catalyze the formation, isomerization, and reduction or oxidation of disulfide bonds. In Arabidopsis thaliana (Mouse-ear cress), this protein is Protein disulfide isomerase-like 1-4 (PDIL1-4).